Here is a 184-residue protein sequence, read N- to C-terminus: Photosystem I assembly protein Ycf4 (184 aa).

Helical transmembrane passes span 21–43 (NFCW…ISSY) and 58–80 (LFFP…SSYL).

The protein belongs to the Ycf4 family.

Its subcellular location is the plastid. It localises to the chloroplast thylakoid membrane. In terms of biological role, seems to be required for the assembly of the photosystem I complex. This Carpobrotus chilensis (Sea fig) protein is Photosystem I assembly protein Ycf4.